We begin with the raw amino-acid sequence, 868 residues long: Leucine--tRNA ligase (868 aa).

Residues 42–52 (PYPSGKLHMGH) carry the 'HIGH' region motif. Residues 627-631 (KMSKS) carry the 'KMSKS' region motif. Lysine 630 is a binding site for ATP.

It belongs to the class-I aminoacyl-tRNA synthetase family.

The protein resides in the cytoplasm. The enzyme catalyses tRNA(Leu) + L-leucine + ATP = L-leucyl-tRNA(Leu) + AMP + diphosphate. The protein is Leucine--tRNA ligase of Pseudomonas syringae pv. tomato (strain ATCC BAA-871 / DC3000).